We begin with the raw amino-acid sequence, 395 residues long: G-protein coupled receptor 182 (395 aa).

The Extracellular segment spans residues 1 to 53 (MSVIPSPRPVSTLEPDNDFRDIHNWTELLHLFNQTFTDCHIEFNENTKHVVLF). N-linked (GlcNAc...) asparagine glycans are attached at residues Asn24 and Asn33. The helical transmembrane segment at 54 to 75 (VFYLAIFVVGLVENVLVICVNC) threads the bilayer. Topologically, residues 76–86 (RRSGRVGMLNL) are cytoplasmic. Residues 87–109 (YILNMAIADLGIILSLPVWMLEV) form a helical membrane-spanning segment. The Extracellular portion of the chain corresponds to 110–123 (MLEYTWLWGSFSCR). Cysteines 122 and 198 form a disulfide. The helical transmembrane segment at 124–145 (FIHYFYLVNMYSSIFFLTCLSI) threads the bilayer. Residues 146 to 166 (DRYVTLTNTSPSWQRHQHRIR) are Cytoplasmic-facing. A helical transmembrane segment spans residues 167–189 (RAVCAGVWVLSAIIPLPEVVHIQ). Residues 190–213 (LLDGSEPMCLFLAPFETYSAWALA) lie on the Extracellular side of the membrane. The chain crosses the membrane as a helical span at residues 214–235 (VALSATILGFLLPFLLIAVFNI). Topologically, residues 236–254 (LTACRLRRQRQTESRRHCL) are cytoplasmic. The chain crosses the membrane as a helical span at residues 255-276 (LMWAYIVVFAICWLPYQVTMLL). Topologically, residues 277–295 (LTLHGTHIFLHCHLVNLLY) are extracellular. A helical transmembrane segment spans residues 296–316 (FFYEIIDCFSMLHCVANPILY). Residues 317–395 (NFLSPSFRGR…QTPHLHSAIL (79 aa)) are Cytoplasmic-facing. Residue Ser329 is modified to Phosphoserine.

It belongs to the G-protein coupled receptor 1 family. Expressed in liver and lung.

Its subcellular location is the cell membrane. Orphan receptor. The protein is G-protein coupled receptor 182 (Gpr182) of Mus musculus (Mouse).